The sequence spans 154 residues: Myoglobin (154 aa).

The Globin domain occupies 2–148; sequence GLSDGEWQLV…FRKDMASNYK (147 aa). Ser-4 carries the phosphoserine modification. Residue His-65 participates in nitrite binding. Residue His-65 participates in O2 binding. Thr-68 carries the phosphothreonine modification. His-94 contributes to the heme b binding site.

It belongs to the globin family. As to quaternary structure, monomeric.

It localises to the cytoplasm. Its subcellular location is the sarcoplasm. The catalysed reaction is Fe(III)-heme b-[protein] + nitric oxide + H2O = Fe(II)-heme b-[protein] + nitrite + 2 H(+). It catalyses the reaction H2O2 + AH2 = A + 2 H2O. Its function is as follows. Monomeric heme protein which primary function is to store oxygen and facilitate its diffusion within muscle tissues. Reversibly binds oxygen through a pentacoordinated heme iron and enables its timely and efficient release as needed during periods of heightened demand. Depending on the oxidative conditions of tissues and cells, and in addition to its ability to bind oxygen, it also has a nitrite reductase activity whereby it regulates the production of bioactive nitric oxide. Under stress conditions, like hypoxia and anoxia, it also protects cells against reactive oxygen species thanks to its pseudoperoxidase activity. The chain is Myoglobin (MB) from Hylobates agilis (Agile gibbon).